The following is a 668-amino-acid chain: UvrABC system protein B (668 aa).

The 241-residue stretch at 36-276 (DNIKGGEKAQ…EEAIKNIMEE (241 aa)) folds into the Helicase ATP-binding domain. 49 to 56 (GATGTGKT) serves as a coordination point for ATP. The short motif at 102 to 125 (YYDYYQPEAYVPSSDTYIEKDSSV) is the Beta-hairpin element. The Helicase C-terminal domain maps to 440 to 606 (QMDDLLGEIN…TIKKEIRDLI (167 aa)). The region spanning 632-667 (QEAIKKLQKQMHEAAELLDFELAAQIRDMVLELKSM) is the UVR domain.

Belongs to the UvrB family. As to quaternary structure, forms a heterotetramer with UvrA during the search for lesions. Interacts with UvrC in an incision complex.

The protein resides in the cytoplasm. The UvrABC repair system catalyzes the recognition and processing of DNA lesions. A damage recognition complex composed of 2 UvrA and 2 UvrB subunits scans DNA for abnormalities. Upon binding of the UvrA(2)B(2) complex to a putative damaged site, the DNA wraps around one UvrB monomer. DNA wrap is dependent on ATP binding by UvrB and probably causes local melting of the DNA helix, facilitating insertion of UvrB beta-hairpin between the DNA strands. Then UvrB probes one DNA strand for the presence of a lesion. If a lesion is found the UvrA subunits dissociate and the UvrB-DNA preincision complex is formed. This complex is subsequently bound by UvrC and the second UvrB is released. If no lesion is found, the DNA wraps around the other UvrB subunit that will check the other stand for damage. The polypeptide is UvrABC system protein B (Streptococcus thermophilus (strain ATCC BAA-491 / LMD-9)).